The following is a 139-amino-acid chain: D-ribose pyranase (139 aa).

H20 functions as the Proton donor in the catalytic mechanism. Substrate is bound by residues D28, H106, and 128–130 (YAN).

This sequence belongs to the RbsD / FucU family. RbsD subfamily. Homodecamer.

The protein resides in the cytoplasm. The catalysed reaction is beta-D-ribopyranose = beta-D-ribofuranose. The protein operates within carbohydrate metabolism; D-ribose degradation; D-ribose 5-phosphate from beta-D-ribopyranose: step 1/2. Catalyzes the interconversion of beta-pyran and beta-furan forms of D-ribose. This is D-ribose pyranase from Cronobacter sakazakii (strain ATCC BAA-894) (Enterobacter sakazakii).